The primary structure comprises 207 residues: MKSERVNYPVKLLNFILSIMNSYLFVLIVSIGFAESSSPKSSTSCSLMTSCAVEKCLDRGMVGRIITESSRDEVFGNLVEKFDMVCIAAKCGNECSQCKHCHYALEQMSALAQGEKTSGLCPKLETCVFNCLTEDVSKVLSCVATRCNVHCYDGDCPSCKMISRRIFSNICKQHSMTTQPQIKYEGTCPNLFMELADDYVAMKKKKL.

The chain crosses the membrane as a helical span at residues 13–33 (LNFILSIMNSYLFVLIVSIGF).

The protein localises to the membrane. Functionally, acts downstream of daf-16/foxo to suppress tumors induced by disruption of gld-1. Potentially a direct target of daf-15/foxo. This Caenorhabditis elegans protein is Protein dct-5 (dct-5).